The chain runs to 251 residues: 5'-nucleotidase SurE (251 aa).

A divalent metal cation-binding residues include D8, D9, S39, and N91.

This sequence belongs to the SurE nucleotidase family. A divalent metal cation serves as cofactor.

Its subcellular location is the cytoplasm. The catalysed reaction is a ribonucleoside 5'-phosphate + H2O = a ribonucleoside + phosphate. Its function is as follows. Nucleotidase that shows phosphatase activity on nucleoside 5'-monophosphates. In Halorhodospira halophila (strain DSM 244 / SL1) (Ectothiorhodospira halophila (strain DSM 244 / SL1)), this protein is 5'-nucleotidase SurE.